Reading from the N-terminus, the 2363-residue chain is Highly reducing polyketide synthase cnsI (2363 aa).

The region spanning 14 to 440 is the Ketosynthase family 3 (KS3) domain; that stretch reads PEPIAIIGMS…GSNAHAIVES (427 aa). Active-site for beta-ketoacyl synthase activity residues include Cys187, His322, and His363. The malonyl-CoA:ACP transacylase (MAT) domain stretch occupies residues 546–854; that stretch reads LAFVFTGQGA…FLQVLKSINA (309 aa). Catalysis depends on Ser638, which acts as the For malonyltransferase activity. The interval 938 to 1068 is N-terminal hotdog fold; that stretch reads HDLLGSPMDF…GTFTLHYDAR (131 aa). Positions 938-1224 are dehydratase (DH) domain; the sequence is HDLLGSPMDF…RLDSIASDVS (287 aa). The PKS/mFAS DH domain occupies 938–1246; that stretch reads HDLLGSPMDF…LGPVPMSKVP (309 aa). His970 serves as the catalytic Proton acceptor; for dehydratase activity. Residues 1089–1246 form a C-terminal hotdog fold region; sequence TAECETNRDA…LGPVPMSKVP (158 aa). Asp1159 functions as the Proton donor; for dehydratase activity in the catalytic mechanism. Residues 1669-1976 are enoylreductase (ER) domain; sequence GGQWVEDRQL…ARQTGISVAI (308 aa). The interval 2001–2177 is catalytic ketoreductase (KRc) domain; sequence TYLLAGGLGM…PGHSIDIGLV (177 aa). The region spanning 2279-2357 is the Carrier domain; the sequence is EDASYVVNQA…VLSEKIAAQS (79 aa). Position 2317 is an O-(pantetheine 4'-phosphoryl)serine (Ser2317).

The protein operates within alkaloid biosynthesis. Its function is as follows. Highly reducing polyketide synthase; part of the gene cluster that mediates the biosynthesis of communesins, a prominent class of indole alkaloids with great potential as pharmaceuticals. Communesins are biosynthesized by the coupling of tryptamine and aurantioclavine, two building blocks derived from L-tryptophan. The L-tryptophan decarboxylase cnsB converts L-tryptophan to tryptamine, whereas the tryptophan dimethylallyltransferase cnsF converts L-tryptophan to 4-dimethylallyl tryptophan which is further transformed to aurantioclavine by the aurantioclavine synthase cnsA, probably aided by the catalase cnsD. The cytochrome P450 monooxygenase cnsC catalyzes the heterodimeric coupling between the two different indole moieties, tryptamine and aurantioclavine, to construct vicinal quaternary stereocenters and yield the heptacyclic communesin scaffold. The O-methyltransferase cnsE then methylates the communesin scaffold to produce communesin K, the simplest characterized communesin that contains the heptacyclic core. The dioxygenase cnsJ converts communesin K into communesin I. Acylation to introduce the hexadienyl group at position N16 of communesin I by the acyltransferase cnsK leads to the production of communesin B. The hexadienyl group is produced by the highly reducing polyketide synthase cnsI, before being hydrolytically removed from cnsI by the serine hydrolase cnsH, converted into hexadienyl-CoA by the CoA ligase cnsG, and then transferred to communesin I by cnsK. Surprisingly, cnsK may also be a promiscuous acyltransferase that can tolerate a range of acyl groups, including acetyl-, propionyl-, and butyryl-CoA, which lead to communesins A, G and H respectively. The roles of the alpha-ketoglutarate-dependent dioxygenases cnsM and cnsP have still to be determined. This Penicillium expansum (Blue mold rot fungus) protein is Highly reducing polyketide synthase cnsI.